The sequence spans 375 residues: Transmembrane protein 183 (375 aa).

Disordered stretches follow at residues 1-21 and 94-128; these read MARG…MPKR and LDSS…PDGT. Positions 95–106 are enriched in acidic residues; it reads DSSDEMDAQEES. Residues 299–319 form a helical membrane-spanning segment; it reads LNFIFIPIVMGMIFTLFTINV.

Belongs to the TMEM183 family.

The protein localises to the membrane. The sequence is that of Transmembrane protein 183 (Tmem183) from Mus musculus (Mouse).